A 325-amino-acid polypeptide reads, in one-letter code: Diaminopimelate epimerase (325 aa).

The substrate site is built by N11 and N69. C78 acts as the Proton donor in catalysis. Residues 79–80 (GN), N166, N203, and 221–222 (ER) each bind substrate. C230 serves as the catalytic Proton acceptor. 231–232 (GT) is a substrate binding site.

The protein belongs to the diaminopimelate epimerase family. In terms of assembly, homodimer.

The protein resides in the cytoplasm. The enzyme catalyses (2S,6S)-2,6-diaminopimelate = meso-2,6-diaminopimelate. The protein operates within amino-acid biosynthesis; L-lysine biosynthesis via DAP pathway; DL-2,6-diaminopimelate from LL-2,6-diaminopimelate: step 1/1. In terms of biological role, catalyzes the stereoinversion of LL-2,6-diaminopimelate (L,L-DAP) to meso-diaminopimelate (meso-DAP), a precursor of L-lysine and an essential component of the bacterial peptidoglycan. In Ligilactobacillus salivarius (strain UCC118) (Lactobacillus salivarius), this protein is Diaminopimelate epimerase.